The chain runs to 100 residues: Replication restart protein PriB (100 aa).

Positions 4 to 99 (TNLVSLAALI…LRIQNIKEYK (96 aa)) constitute an SSB domain.

Belongs to the PriB family. Homodimer. Component of the replication restart primosome. Primosome assembly occurs via a 'hand-off' mechanism. PriA binds to replication forks, subsequently PriB then DnaT bind; DnaT then displaces ssDNA to generate the helicase loading substrate. Interacts with PriA with high affinity, independent of DNA presence.

Its activity is regulated as follows. PriA:PriB complex-catalyzed duplex DNA winding is inhibited by CGS 15943 (CHEBI:131351); PriA is the drug target. Stimulates the DNA unwinding activity of PriA helicase, which does not seem to require single-stranded (ss)DNA-binding by PriB. Activates DNA-dependent ATP hydrolysis catalyzed by PriA. Weakly binds ssDNA. Weakly binds double-stranded (ds)DNA, a partial duplex DNA with a 3' ssDNA overhang, and a forked DNA structure with fully duplex leading and lagging strand arms in vitro. In terms of biological role, involved in the restart of stalled replication forks, which reloads the replicative helicase on sites other than the origin of replication; the PriA-PriB pathway is the major replication restart pathway. During primosome assembly it facilitates complex formation between PriA and DnaT on DNA; stabilizes PriA on DNA. Stimulates the DNA unwinding activity of PriA helicase. This Neisseria gonorrhoeae (strain ATCC 700825 / FA 1090) protein is Replication restart protein PriB.